The primary structure comprises 780 residues: Elongation factor G-2, chloroplastic (780 aa).

The transit peptide at 1–79 (MAAESSLRVA…PRRNFSVFAM (79 aa)) directs the protein to the chloroplast. Positions 91–366 (KDYRNIGIMA…AVVDYLPSPL (276 aa)) constitute a tr-type G domain. GTP is bound by residues 100–107 (AHIDAGKT), 164–168 (DTPGH), and 218–221 (NKMD).

Belongs to the TRAFAC class translation factor GTPase superfamily. Classic translation factor GTPase family. EF-G/EF-2 subfamily.

It localises to the plastid. It is found in the chloroplast. Its pathway is protein biosynthesis; polypeptide chain elongation. Functionally, chloroplast-localized elongation factor EF-G involved in protein synthesis in plastids. Catalyzes the GTP-dependent ribosomal translocation step during translation elongation. During this step, the ribosome changes from the pre-translocational (PRE) to the post-translocational (POST) state as the newly formed A-site-bound peptidyl-tRNA and P-site-bound deacylated tRNA move to the P and E sites, respectively. Catalyzes the coordinated movement of the two tRNA molecules, the mRNA and conformational changes in the ribosome. This Glycine max (Soybean) protein is Elongation factor G-2, chloroplastic (fusA2).